We begin with the raw amino-acid sequence, 426 residues long: uncharacterized protein (426 aa).

The signal sequence occupies residues 1–23 (MKKFILFLIILLFSIYFLNVSSA).

This is an uncharacterized protein from Methanocaldococcus jannaschii (strain ATCC 43067 / DSM 2661 / JAL-1 / JCM 10045 / NBRC 100440) (Methanococcus jannaschii).